The sequence spans 101 residues: Small ribosomal subunit protein uS14 (101 aa).

The protein belongs to the universal ribosomal protein uS14 family. As to quaternary structure, part of the 30S ribosomal subunit. Contacts proteins S3 and S10.

In terms of biological role, binds 16S rRNA, required for the assembly of 30S particles and may also be responsible for determining the conformation of the 16S rRNA at the A site. This Vesicomyosocius okutanii subsp. Calyptogena okutanii (strain HA) protein is Small ribosomal subunit protein uS14.